Consider the following 580-residue polypeptide: Double-stranded RNA-binding protein Staufen homolog 1 (580 aa).

S2 carries the post-translational modification N-acetylserine. Residues 34 to 44 are compositionally biased toward polar residues; that stretch reads SIPSTTSSLPS. Positions 34–59 are disordered; the sequence is SIPSTTSSLPSENAGRPIQNSALPSA. Positions 72 to 162 constitute a DRBM 1 domain; the sequence is TPTVELNALC…AAKALRTLQS (91 aa). Asymmetric dimethylarginine is present on R108. R115 bears the Asymmetric dimethylarginine; alternate mark. Position 115 is an omega-N-methylarginine; alternate (R115). Residues 158–189 form a disordered region; the sequence is RTLQSEPLPERPEGRRPGEQVNGRESEEENLN. Residues 165 to 182 show a composition bias toward basic and acidic residues; it reads LPERPEGRRPGEQVNGRE. Position 183 is a phosphoserine (S183). The DRBM 2 domain maps to 191-258; the sequence is SEISQVFEIA…AIAVLEELKK (68 aa). S285 carries the phosphoserine modification. The region spanning 293–361 is the DRBM 3 domain; that stretch reads NPISRLAQIQ…AENMLEILGF (69 aa). The interval 367–404 is disordered; the sequence is QPTKPALKSEEKTPIKKPGDGRKVTFFEPGSGDENGTS. The segment covering 373–391 has biased composition (basic and acidic residues); the sequence is LKSEEKTPIKKPGDGRKVT. Phosphoserine is present on S397.

As to quaternary structure, binds tubulin. Binds with low affinity single-stranded RNA or DNA homopolymers. Interacts with CASC3 in an RNA-dependent manner. Identified in a mRNP complex, at least composed of DHX9, DDX3X, ELAVL1, HNRNPU, IGF2BP1, ILF3, PABPC1, PCBP2, PTBP2, STAU1, STAU2, SYNCRIP and YBX1. Interacts with the influenza virus nonstructural protein NS1.

The protein localises to the cytoplasm. It is found in the rough endoplasmic reticulum. Binds double-stranded RNA (regardless of the sequence) and tubulin. May play a role in specific positioning of mRNAs at given sites in the cell by cross-linking cytoskeletal and RNA components, and in stimulating their translation at the site. The polypeptide is Double-stranded RNA-binding protein Staufen homolog 1 (STAU1) (Ailuropoda melanoleuca (Giant panda)).